Here is a 548-residue protein sequence, read N- to C-terminus: Nodulation protein NolO (548 aa).

This sequence belongs to the NodU/CmcH family.

Its function is as follows. Involved in 6-O-carbamoylation of Nod-factors. This Bradyrhizobium diazoefficiens (strain JCM 10833 / BCRC 13528 / IAM 13628 / NBRC 14792 / USDA 110) protein is Nodulation protein NolO (nolO).